Reading from the N-terminus, the 188-residue chain is Anaphase-promoting complex subunit 10 (188 aa).

In terms of domain architecture, DOC spans 4-187 (NSNINSNSRL…SPEVSMFQTL (184 aa)).

Belongs to the APC10 family. As to quaternary structure, the APC/C is composed of at least 13 subunits that stay tightly associated throughout the cell cycle: anapc1, anapc2, anapc3, anapc4, anapc5, anapc6, anapc7, anapc8, anapc10, anapc11, cdc20, cdc26 and cdh1.

Its subcellular location is the nucleus. It participates in protein modification; protein ubiquitination. Functionally, component of the anaphase promoting complex/cyclosome (APC/C), a cell cycle-regulated E3 ubiquitin-protein ligase complex that controls progression through mitosis and the G1 phase of the cell cycle. The protein is Anaphase-promoting complex subunit 10 (anapc10) of Dictyostelium discoideum (Social amoeba).